Reading from the N-terminus, the 83-residue chain is Putative protein T-ENOL (83 aa).

Residues 1–33 are disordered; the sequence is MASTPMGNEGEKKSSWPSQAAPSLRGGPASLSR.

The polypeptide is Putative protein T-ENOL (Homo sapiens (Human)).